The sequence spans 133 residues: Small ribosomal subunit protein uS8 (133 aa).

The disordered stretch occupies residues 1–28; it reads MANHDPISDMLTRIRNASEKRHEKTKVP. A compositionally biased stretch (basic and acidic residues) spans 16-26; sequence NASEKRHEKTK.

It belongs to the universal ribosomal protein uS8 family. In terms of assembly, part of the 30S ribosomal subunit. Contacts proteins S5 and S12.

One of the primary rRNA binding proteins, it binds directly to 16S rRNA central domain where it helps coordinate assembly of the platform of the 30S subunit. This Prochlorococcus marinus (strain NATL2A) protein is Small ribosomal subunit protein uS8.